We begin with the raw amino-acid sequence, 229 residues long: Flagellar L-ring protein (229 aa).

The first 23 residues, 1–23, serve as a signal peptide directing secretion; it reads MNPLTRVALAVAAFAALVLALSA. Cys-24 carries N-palmitoyl cysteine lipidation. Residue Cys-24 is the site of S-diacylglycerol cysteine attachment.

This sequence belongs to the FlgH family. As to quaternary structure, the basal body constitutes a major portion of the flagellar organelle and consists of four rings (L,P,S, and M) mounted on a central rod.

The protein localises to the cell outer membrane. It localises to the bacterial flagellum basal body. In terms of biological role, assembles around the rod to form the L-ring and probably protects the motor/basal body from shearing forces during rotation. This is Flagellar L-ring protein from Anaeromyxobacter dehalogenans (strain 2CP-1 / ATCC BAA-258).